The sequence spans 59 residues: Small ribosomal subunit protein bS21 (59 aa).

The tract at residues 36 to 59 (EHYEKPSVKRKKKAEAAKRNKSKF) is disordered. Basic residues predominate over residues 43–59 (VKRKKKAEAAKRNKSKF).

It belongs to the bacterial ribosomal protein bS21 family.

The polypeptide is Small ribosomal subunit protein bS21 (Alkaliphilus oremlandii (strain OhILAs) (Clostridium oremlandii (strain OhILAs))).